We begin with the raw amino-acid sequence, 243 residues long: Ras-related protein Rab-12 (243 aa).

Residue Met1 is modified to N-acetylmethionine. Residues 1–36 (MDPSAALHRRPAGGSLGAVSPALSGGQARRRKQPPR) are disordered. Residues Ser15, Ser20, and Ser24 each carry the phosphoserine modification. Gly51, Val52, Gly53, Lys54, Thr55, Ser72, and Thr73 together coordinate GTP. Residue Thr55 coordinates Mg(2+). 2 consecutive short sequence motifs (switch) follow at residues 64–78 (DTFC…GVDF) and 96–113 (DTAG…YYRS). The Mg(2+) site is built by Thr73 and Asp96. Gly99 is a binding site for GTP. Ser105 carries the phosphoserine; by LRRK2 modification. Positions 154, 155, 157, 185, 186, and 187 each coordinate GTP. Residues Cys242 and Cys243 are each lipidated (S-geranylgeranyl cysteine).

This sequence belongs to the small GTPase superfamily. Rab family. As to quaternary structure, interacts with RABIF and OPTN. Interacts with LRRK2; interaction facilitates phosphorylation of Ser-105. Interacts with GDI1, GDI2, CHM and CHML; these interactions are disrupted by phosphorylation on Ser-105. Interacts with RILPL1 and RILPL2; these interactions are dependent on phosphorylation of Ser-105. Mg(2+) serves as cofactor. In terms of processing, phosphorylation of Ser-105 in the switch II region by LRRK2 prevents the association of RAB regulatory proteins, including CHM, CHML and RAB GDP dissociation inhibitors GDI1 and GDI2. In terms of tissue distribution, ubiquitously expressed.

Its subcellular location is the recycling endosome membrane. It is found in the lysosome membrane. The protein resides in the golgi apparatus membrane. The protein localises to the cytoplasmic vesicle. It localises to the autophagosome. It carries out the reaction GTP + H2O = GDP + phosphate + H(+). Regulated by guanine nucleotide exchange factors (GEFs) including DENND3 which promote the exchange of bound GDP for free GTP. Regulated by GTPase activating proteins (GAPs) which increase the GTP hydrolysis activity. Inhibited by GDP dissociation inhibitors (GDIs). Its function is as follows. The small GTPases Rab are key regulators of intracellular membrane trafficking, from the formation of transport vesicles to their fusion with membranes. Rabs cycle between an inactive GDP-bound form and an active GTP-bound form that is able to recruit to membranes different set of downstream effectors directly responsible for vesicle formation, movement, tethering and fusion. RAB12 may play a role in protein transport from recycling endosomes to lysosomes regulating, for instance, the degradation of the transferrin receptor. Involved in autophagy. The polypeptide is Ras-related protein Rab-12 (Mus musculus (Mouse)).